Here is a 334-residue protein sequence, read N- to C-terminus: CRISPR-associated protein Cas1 3 (334 aa).

Glu165, His230, and Glu245 together coordinate Mn(2+).

This sequence belongs to the CRISPR-associated endonuclease Cas1 family. As to quaternary structure, homodimer, forms a heterotetramer with a Cas2 homodimer. The cofactor is Mg(2+). It depends on Mn(2+) as a cofactor.

Functionally, CRISPR (clustered regularly interspaced short palindromic repeat), is an adaptive immune system that provides protection against mobile genetic elements (viruses, transposable elements and conjugative plasmids). CRISPR clusters contain spacers, sequences complementary to antecedent mobile elements, and target invading nucleic acids. CRISPR clusters are transcribed and processed into CRISPR RNA (crRNA). Acts as a dsDNA endonuclease. Involved in the integration of spacer DNA into the CRISPR cassette. This chain is CRISPR-associated protein Cas1 3, found in Methanobrevibacter ruminantium (strain ATCC 35063 / DSM 1093 / JCM 13430 / OCM 146 / M1) (Methanobacterium ruminantium).